A 481-amino-acid polypeptide reads, in one-letter code: NADH-quinone oxidoreductase subunit N (481 aa).

13 consecutive transmembrane segments (helical) span residues 14-34, 38-57, 76-96, 108-128, 162-182, 204-224, 235-255, 272-292, 297-317, 323-343, 369-389, 403-423, and 449-469; these read LILSVGALLLLLVAAFGGDGF, IGWGAVALFAAAGFSLTGPA, FAKLLIYIAAAVSVAVAPGFF, PVLILLSGVGMGMMVSAGDLL, FVLGALASGILLYGISLLYGF, MFGMVFVFAGLAFKISAVPFH, PTPVTAFFASAPKVAGMALLL, IVVFAALASTILGAVAAIGQT, LLAYSSINNVGFALFGLAAGS, ATMTYMAVYVAMTLGSFICVL, LAAAFAIFMFSLAGIPPLFGF, GFWPLAMVGIATSVIGAFYYL, and GLITLAALAVSPLGYLAIPLL.

The protein belongs to the complex I subunit 2 family. NDH-1 is composed of 14 different subunits. Subunits NuoA, H, J, K, L, M, N constitute the membrane sector of the complex.

Its subcellular location is the cell inner membrane. It carries out the reaction a quinone + NADH + 5 H(+)(in) = a quinol + NAD(+) + 4 H(+)(out). NDH-1 shuttles electrons from NADH, via FMN and iron-sulfur (Fe-S) centers, to quinones in the respiratory chain. The immediate electron acceptor for the enzyme in this species is believed to be ubiquinone. Couples the redox reaction to proton translocation (for every two electrons transferred, four hydrogen ions are translocated across the cytoplasmic membrane), and thus conserves the redox energy in a proton gradient. The protein is NADH-quinone oxidoreductase subunit N of Rhizorhabdus wittichii (strain DSM 6014 / CCUG 31198 / JCM 15750 / NBRC 105917 / EY 4224 / RW1) (Sphingomonas wittichii).